Consider the following 396-residue polypeptide: Squamosa promoter-binding-like protein 10 (396 aa).

Residues Q74–D104 form a disordered region. The segment covering L90–D104 has biased composition (polar residues). The SBP-type zinc-finger motif lies at V173 to P250. The Zn(2+) site is built by C176, C181, C198, H201, C217, C220, H224, and C236. The Bipartite nuclear localization signal signature appears at K233 to K249.

The cofactor is Zn(2+).

It is found in the nucleus. In terms of biological role, trans-acting factor that binds specifically to the consensus nucleotide sequence 5'-TNCGTACAA-3'. In Arabidopsis thaliana (Mouse-ear cress), this protein is Squamosa promoter-binding-like protein 10 (SPL10).